Consider the following 196-residue polypeptide: Sesquiterpene phosphatase astK (196 aa).

Belongs to the HAD-like hydrolase superfamily.

It catalyses the reaction (S,S)-drim-8-en-11-yl phosphate + H2O = (S,S)-drim-8-en-11-ol + phosphate. It participates in secondary metabolite biosynthesis; terpenoid biosynthesis. Its function is as follows. Sesquiterpene phosphatase; part of the gene cluster that mediates the biosynthesis of astellolides, drimane-type sesquiterpene esters that show antimicrobial, anti-inflammatory, and anti-tumor activities. The first step in astellolide biosynthesis is performed by the sesquiterpene cyclase astC that catalyzes the formation of drimanyl pyrophosphate from farnesyl pyrophosphate. Drimanyl pyrophosphate is then dephosphorylated by the sesquiterpene phosphatase astI to produce drimanyl monophosphate which is further dephosphorylated to drim-8-ene-11-ol by atsK. Drim-8-ene-11-ol is converted to confertifolin, probably by the cytochrome P450 monooxygenase astD and/or the dehydrogenase astE. The cytochrome P450 monooxygenases astB, astF and astJ then hydroxylate confertifolin at C6, C14, or C15 to form trihydroxy confertifolin. The nonribosomal peptide synthetase astA catalyzes ester bond formation between trihydroxy contifolin and benzoic acid (BA) or 4-hydroxy benzoic acid (4HBA), leading to the formation of dideacetyl astellolides A and B, respectively. Finally, the O-acetyltransferase astG converts dideacetyl astellolides A and B into deacetyl astellolides A and B. In Aspergillus oryzae (strain ATCC 42149 / RIB 40) (Yellow koji mold), this protein is Sesquiterpene phosphatase astK.